A 273-amino-acid chain; its full sequence is Tyrosinase (273 aa).

Cu cation contacts are provided by histidine 37, histidine 53, histidine 62, histidine 189, histidine 193, and histidine 215.

It belongs to the tyrosinase family. Requires Cu(2+) as cofactor.

The enzyme catalyses 2 L-dopa + O2 = 2 L-dopaquinone + 2 H2O. It catalyses the reaction L-tyrosine + O2 = L-dopaquinone + H2O. Its function is as follows. This is a copper-containing oxidase that functions in the formation of pigments such as melanins and other polyphenolic compounds. This is Tyrosinase (melC2) from Streptomyces lincolnensis.